The sequence spans 261 residues: Na(+)-translocating NADH-quinone reductase subunit C (261 aa).

The helical transmembrane segment at 12–32 threads the bilayer; the sequence is LGVVIGLSLVCSIIVSTAAVG. Residue threonine 229 is modified to FMN phosphoryl threonine.

The protein belongs to the NqrC family. As to quaternary structure, composed of six subunits; NqrA, NqrB, NqrC, NqrD, NqrE and NqrF. FMN is required as a cofactor.

Its subcellular location is the cell inner membrane. It catalyses the reaction a ubiquinone + n Na(+)(in) + NADH + H(+) = a ubiquinol + n Na(+)(out) + NAD(+). Functionally, NQR complex catalyzes the reduction of ubiquinone-1 to ubiquinol by two successive reactions, coupled with the transport of Na(+) ions from the cytoplasm to the periplasm. NqrA to NqrE are probably involved in the second step, the conversion of ubisemiquinone to ubiquinol. This chain is Na(+)-translocating NADH-quinone reductase subunit C, found in Vibrio parahaemolyticus serotype O3:K6 (strain RIMD 2210633).